We begin with the raw amino-acid sequence, 345 residues long: Carbamoyl phosphate synthase small chain (345 aa).

The CPSase stretch occupies residues 1-169; it reads MKKYLVMEDG…FVKGEEGGTV (169 aa). Serine 45, glycine 213, and glycine 215 together coordinate L-glutamine. One can recognise a Glutamine amidotransferase type-1 domain in the interval 168–345; that stretch reads TVLFIDLGSK…GEMKRRIGYA (178 aa). The Nucleophile role is filled by cysteine 242. The L-glutamine site is built by phenylalanine 243, glutamine 246, asparagine 282, glycine 284, and tyrosine 285. Active-site residues include histidine 321 and glutamate 323.

This sequence belongs to the CarA family. In terms of assembly, composed of two chains; the small (or glutamine) chain promotes the hydrolysis of glutamine to ammonia, which is used by the large (or ammonia) chain to synthesize carbamoyl phosphate. Tetramer of heterodimers (alpha,beta)4.

It catalyses the reaction hydrogencarbonate + L-glutamine + 2 ATP + H2O = carbamoyl phosphate + L-glutamate + 2 ADP + phosphate + 2 H(+). It carries out the reaction L-glutamine + H2O = L-glutamate + NH4(+). It participates in amino-acid biosynthesis; L-arginine biosynthesis; carbamoyl phosphate from bicarbonate: step 1/1. It functions in the pathway pyrimidine metabolism; UMP biosynthesis via de novo pathway; (S)-dihydroorotate from bicarbonate: step 1/3. In terms of biological role, small subunit of the glutamine-dependent carbamoyl phosphate synthetase (CPSase). CPSase catalyzes the formation of carbamoyl phosphate from the ammonia moiety of glutamine, carbonate, and phosphate donated by ATP, constituting the first step of 2 biosynthetic pathways, one leading to arginine and/or urea and the other to pyrimidine nucleotides. The small subunit (glutamine amidotransferase) binds and cleaves glutamine to supply the large subunit with the substrate ammonia. This is Carbamoyl phosphate synthase small chain from Thermoplasma volcanium (strain ATCC 51530 / DSM 4299 / JCM 9571 / NBRC 15438 / GSS1).